The primary structure comprises 363 residues: Aminomethyltransferase (363 aa).

The protein belongs to the GcvT family. As to quaternary structure, the glycine cleavage system is composed of four proteins: P, T, L and H.

The enzyme catalyses N(6)-[(R)-S(8)-aminomethyldihydrolipoyl]-L-lysyl-[protein] + (6S)-5,6,7,8-tetrahydrofolate = N(6)-[(R)-dihydrolipoyl]-L-lysyl-[protein] + (6R)-5,10-methylene-5,6,7,8-tetrahydrofolate + NH4(+). In terms of biological role, the glycine cleavage system catalyzes the degradation of glycine. This Staphylococcus aureus (strain N315) protein is Aminomethyltransferase.